A 748-amino-acid chain; its full sequence is Transcription factor FBD3 (748 aa).

A compositionally biased stretch (basic and acidic residues) spans M1–D10. Residues M1–R26 are disordered. The segment covering Q11–P21 has biased composition (polar residues). The zn(2)-C6 fungal-type DNA-binding region spans C32–C59. Disordered regions lie at residues G116–P160 and I417–N438. Residues A131–A141 are compositionally biased toward low complexity. Residues S429–N438 are compositionally biased toward polar residues.

It localises to the nucleus. In terms of biological role, transcription factor; part of the Fusarium detoxification of benzoxazolinone cluster 2 (FDB2) involved in the degradation of benzoxazolinones produced by the host plant. Maize, wheat, and rye produce the 2 benzoxazinone phytoanticipins 2,4-dihy-droxy-7-methoxy-1,4-benzoxazin-3-one (DIMBOA) and 2,4-dihydroxy-1,4-benzoxazin-3-one (DIBOA) that, due to their inherent instability once released, spontaneously degrade to the more stable corresponding benzoxazolinones, 6-methoxy-2-benzoxazolinone (MBOA) and 2-benzoxazolinone (BOA), respectively. FDB3 is not essentiel, but contributes to efficient BOA biotransformation. The sequence is that of Transcription factor FBD3 from Gibberella moniliformis (strain M3125 / FGSC 7600) (Maize ear and stalk rot fungus).